The primary structure comprises 387 residues: Zinc finger transcription factor YY1 (387 aa).

5 consecutive C2H2-type zinc fingers follow at residues 79–103 (FLCS…SHIH), 108–132 (YVCD…YLIH), 138–162 (YICT…MKTH), 168–193 (HICP…AAYH), and 230–255 (YACP…KREH). The segment at 201–290 (TPKYTPPAEK…DDGSDQDVYR (90 aa)) is MED18-binding. The tract at residues 258–387 (HLQEENADTP…DDDEETEYED (130 aa)) is disordered. Ser284 carries the post-translational modification Phosphoserine. The segment covering 291 to 305 (KHASNGKGQTHKQQS) has biased composition (basic residues). The short motif at 319 to 326 (GKKGSTSS) is the Nuclear localization signal element. Residues 339–367 (AKETFEEVEREEEEDSEETEEDRDNVEDG) adopt a coiled-coil conformation. Acidic residues-rich tracts occupy residues 344-363 (EEVE…DRDN) and 373-387 (NNED…EYED).

In terms of assembly, interacts with MED18 to suppress disease susceptibility via the repression of genes glutaredoxins GRX480, GRXS13 and thioredoxin TRX-h5. Mostly expressed in flowers, to a lower extent in seedlings, stems and leaves, and, at low levels, in roots and senescent leaves.

It is found in the nucleus. Dual-function transcription factor with both repression and activation activities. Binds to 5'-CCATATT-3' motif in target gene promoters (e.g. ABR1). Also binds to G-rich DNA motif 5'-GGGGGCAGTGG-3'. Regulates the expression of genes involved in diverse cellular pathways, including glucose metabolism, photosynthesis, phototropism and stress response (e.g. salt, drought and osmotic stress). Regulates plant immunity, especially during necrotrophic fungal infection (e.g. B.cinerea). Binds to ABR1 promoter and promotes its expression, thus negatively regulating the abscisic acid (ABA) signaling pathway. Represses ABA- and salt-responsive genes expression. This Arabidopsis thaliana (Mouse-ear cress) protein is Zinc finger transcription factor YY1.